The sequence spans 1582 residues: Sca1 complex scaffold protein scaA (1582 aa).

2 stretches are compositionally biased toward low complexity: residues 1 to 14 (MSSL…TPST) and 109 to 131 (LSPS…TTST). Disordered regions lie at residues 1–22 (MSSL…TFSK) and 108–147 (GLSP…QIKK). Residues 4–37 (LDPSLSTTPSTNRRGTFSKAKSFRRAALNLEPQG) form a TPR 1 repeat. One copy of the TPR 2 repeat lies at 166–199 (IYTSFPESMAFDDYMDYEESLVEWKRQVEQNLGI). The disordered stretch occupies residues 246 to 349 (IKETNSSVND…PSTGSLAGFV (104 aa)). 3 stretches are compositionally biased toward polar residues: residues 249–267 (TNSS…PTLR), 288–310 (NKDN…NSGI), and 318–332 (SDTS…QLDG). Position 359 is a phosphoserine; by PKB (Ser-359). Residues 400 to 600 (RSGSGFGMDH…QRQTSTWFRG (201 aa)) form a gefA and gefH binding region. Disordered stretches follow at residues 468 to 493 (PKNS…GVGG) and 686 to 734 (SLSS…DKDK). 2 stretches are compositionally biased toward gly residues: residues 478–493 (GSGG…GVGG) and 694–714 (QQQG…GSGS). Positions 715 to 726 (GLNMSGTSGSSG) are enriched in low complexity. A TPR 3 repeat occupies 742–777 (MHSINNTTNVGTKEDRRQYTKILQTYEQRLQFSFRL). Residues 864 to 875 (GGGSGGASGGGI) are compositionally biased toward gly residues. A disordered region spans residues 864–978 (GGGSGGASGG…GSISTHPNTP (115 aa)). Residues 903 to 928 (HIPSGSSLLSSPPNRQGSTGSFSFIG) show a composition bias toward low complexity. Polar residues predominate over residues 940–953 (NSSSLESPRTQSQL). The span at 960–972 (GSSPRSHSGGSIS) shows a compositional bias: low complexity. Residues 1000-1400 (FLDLTNEKLA…SIKKEGNLYN (401 aa)) are pppA and pho2B binding. The stretch at 1080-1113 (TQEVVRLVFVYYYLGIIQERLNFFSNNVGILGFV) is one TPR 4 repeat.

In terms of assembly, component of the Sca1 complex composed of at least gefA, gefH, scaA, phr, and the protein phosphatase 2A subunits pppA and pho2B. In terms of processing, phosphorylated at Ser-359 by PKB and PKBR1 is induced by chemoattractant.

It is found in the cell membrane. Component of the Sca1 complex, a regulator of cell motility, chemotaxis and signal relay. The Sca1 complex is recruited to the plasma membrane in a chemoattractant- and F-actin-dependent manner and is enriched at the leading edge of chemotaxing cells where it regulates F-actin dynamics and signal relay by controlling the activation of rasC and the downstream target of rapamycin complex 2 (TORC2)-Akt/protein kinase B (PKB) pathway. ScaA acts as a molecular scaffold, bringing together gefA, gefH and phr with PP2A. The sequence is that of Sca1 complex scaffold protein scaA from Dictyostelium discoideum (Social amoeba).